The sequence spans 138 residues: MNNQPCSIVWRRFLTSKVKPAVRIPNENLKANKPTNFTKNFPLNERTKAWERAGEDKESWFKRKYAHVHAKQKSQPQVDLYGKKEAHYSRLKQDILSSKRQQEEHKSKYSRKSVTLGLRPNPLMEYIYGTNSVIAALN.

The N-terminal 21 residues, 1–21, are a transit peptide targeting the mitochondrion; it reads MNNQPCSIVWRRFLTSKVKPA. Residues 92–113 form a disordered region; the sequence is KQDILSSKRQQEEHKSKYSRKS.

The protein belongs to the class IV-like SAM-binding methyltransferase superfamily. RNA methyltransferase TrmH family.

Its subcellular location is the mitochondrion. The catalysed reaction is a guanosine in 21S rRNA + S-adenosyl-L-methionine = a 2'-O-methylguanosine in 21S rRNA + S-adenosyl-L-homocysteine + H(+). S-adenosyl-L-methionine-dependent 2'-O-ribose methyltransferase that catalyzes the formation of the 2'-O-methylguanosine corresponding to position 2270 in S.cerevisiae 21S mitochondrial large ribosomal RNA, a universally conserved modification in the peptidyl transferase domain of the 21S rRNA. The chain is rRNA methyltransferase 1, mitochondrial from Lachancea kluyveri (strain ATCC 58438 / CBS 3082 / BCRC 21498 / NBRC 1685 / JCM 7257 / NCYC 543 / NRRL Y-12651) (Yeast).